Here is a 214-residue protein sequence, read N- to C-terminus: Adenylate kinase (214 aa).

Residue 10–15 (GAGKGT) coordinates ATP. The interval 30 to 59 (STGDMFRAAIKAGTELGKQAKALMDEGKLV) is NMP. AMP contacts are provided by residues T31, R36, 57-59 (KLV), 85-88 (GFPR), and Q92. Residues 122-159 (GRRVHQASGRSYHIVYNPPKVEGKDDVTGEDLIIRADD) are LID. Residues R123 and 132-133 (SY) each bind ATP. 2 residues coordinate AMP: R156 and R167. Residue Q200 coordinates ATP.

It belongs to the adenylate kinase family. In terms of assembly, monomer.

It localises to the cytoplasm. It catalyses the reaction AMP + ATP = 2 ADP. Its pathway is purine metabolism; AMP biosynthesis via salvage pathway; AMP from ADP: step 1/1. In terms of biological role, catalyzes the reversible transfer of the terminal phosphate group between ATP and AMP. Plays an important role in cellular energy homeostasis and in adenine nucleotide metabolism. It may be linked to the biosynthesis of lipopolysaccharide surface molecules, which are important for the pathogenesis of H.influenzae. This chain is Adenylate kinase, found in Haemophilus influenzae (strain ATCC 51907 / DSM 11121 / KW20 / Rd).